A 597-amino-acid chain; its full sequence is Aspartate--tRNA(Asp/Asn) ligase (597 aa).

Glutamate 170 serves as a coordination point for L-aspartate. Positions 194 to 197 are aspartate; it reads QLFK. Arginine 216 is a binding site for L-aspartate. Residues 216-218 and glutamine 225 contribute to the ATP site; that span reads RDE. Residue histidine 448 participates in L-aspartate binding. Glutamate 482 serves as a coordination point for ATP. Position 489 (arginine 489) interacts with L-aspartate. Position 534–537 (534–537) interacts with ATP; it reads GWDR. The tract at residues 558 to 597 is disordered; sequence GGGVDPLTDAPAPITAAQRKESGIDAKPEKAEKAGKPADA. Residues 575 to 597 show a composition bias toward basic and acidic residues; it reads QRKESGIDAKPEKAEKAGKPADA.

Belongs to the class-II aminoacyl-tRNA synthetase family. Type 1 subfamily. Homodimer.

It localises to the cytoplasm. The enzyme catalyses tRNA(Asx) + L-aspartate + ATP = L-aspartyl-tRNA(Asx) + AMP + diphosphate. Aspartyl-tRNA synthetase with relaxed tRNA specificity since it is able to aspartylate not only its cognate tRNA(Asp) but also tRNA(Asn). Reaction proceeds in two steps: L-aspartate is first activated by ATP to form Asp-AMP and then transferred to the acceptor end of tRNA(Asp/Asn). The polypeptide is Aspartate--tRNA(Asp/Asn) ligase (Mycobacteroides abscessus (strain ATCC 19977 / DSM 44196 / CCUG 20993 / CIP 104536 / JCM 13569 / NCTC 13031 / TMC 1543 / L948) (Mycobacterium abscessus)).